The chain runs to 175 residues: Large ribosomal subunit protein uL10 (175 aa).

The protein belongs to the universal ribosomal protein uL10 family. In terms of assembly, part of the ribosomal stalk of the 50S ribosomal subunit. The N-terminus interacts with L11 and the large rRNA to form the base of the stalk. The C-terminus forms an elongated spine to which L12 dimers bind in a sequential fashion forming a multimeric L10(L12)X complex.

In terms of biological role, forms part of the ribosomal stalk, playing a central role in the interaction of the ribosome with GTP-bound translation factors. The polypeptide is Large ribosomal subunit protein uL10 (Psychrobacter sp. (strain PRwf-1)).